Consider the following 1157-residue polypeptide: ATP-dependent helicase/deoxyribonuclease subunit B (1157 aa).

Residues M1–T278 form the UvrD-like helicase ATP-binding domain. Residue G8–T15 coordinates ATP. The region spanning E272–L590 is the UvrD-like helicase C-terminal domain. 4 residues coordinate [4Fe-4S] cluster: C794, C1115, C1118, and C1124.

The protein belongs to the helicase family. AddB/RexB type 1 subfamily. In terms of assembly, heterodimer of AddA and AddB. Requires Mg(2+) as cofactor. It depends on [4Fe-4S] cluster as a cofactor.

Its function is as follows. The heterodimer acts as both an ATP-dependent DNA helicase and an ATP-dependent, dual-direction single-stranded exonuclease. Recognizes the chi site generating a DNA molecule suitable for the initiation of homologous recombination. The AddB subunit has 5' -&gt; 3' nuclease activity but not helicase activity. The polypeptide is ATP-dependent helicase/deoxyribonuclease subunit B (Listeria monocytogenes serotype 4a (strain HCC23)).